We begin with the raw amino-acid sequence, 356 residues long: UDP-N-acetylglucosamine--N-acetylmuramyl-(pentapeptide) pyrophosphoryl-undecaprenol N-acetylglucosamine transferase (356 aa).

UDP-N-acetyl-alpha-D-glucosamine-binding positions include 12–14 (TGG), Asn-124, Arg-163, Ser-188, Ile-242, and Gln-287.

The protein belongs to the glycosyltransferase 28 family. MurG subfamily.

The protein resides in the cell inner membrane. The catalysed reaction is di-trans,octa-cis-undecaprenyl diphospho-N-acetyl-alpha-D-muramoyl-L-alanyl-D-glutamyl-meso-2,6-diaminopimeloyl-D-alanyl-D-alanine + UDP-N-acetyl-alpha-D-glucosamine = di-trans,octa-cis-undecaprenyl diphospho-[N-acetyl-alpha-D-glucosaminyl-(1-&gt;4)]-N-acetyl-alpha-D-muramoyl-L-alanyl-D-glutamyl-meso-2,6-diaminopimeloyl-D-alanyl-D-alanine + UDP + H(+). It participates in cell wall biogenesis; peptidoglycan biosynthesis. In terms of biological role, cell wall formation. Catalyzes the transfer of a GlcNAc subunit on undecaprenyl-pyrophosphoryl-MurNAc-pentapeptide (lipid intermediate I) to form undecaprenyl-pyrophosphoryl-MurNAc-(pentapeptide)GlcNAc (lipid intermediate II). The chain is UDP-N-acetylglucosamine--N-acetylmuramyl-(pentapeptide) pyrophosphoryl-undecaprenol N-acetylglucosamine transferase from Pseudomonas syringae pv. tomato (strain ATCC BAA-871 / DC3000).